The sequence spans 188 residues: HGPRTase-like protein (188 aa).

It belongs to the purine/pyrimidine phosphoribosyltransferase family. Archaeal HPRT subfamily.

Its function is as follows. May catalyze a purine salvage reaction, the substrate is unknown. The protein is HGPRTase-like protein of Halobacterium salinarum (strain ATCC 29341 / DSM 671 / R1).